A 208-amino-acid polypeptide reads, in one-letter code: MKDFLQKVNSYIKEAFSAGKYLYDGFTVTFDHLRRRPVTVQYPYEKLIPSERYRGRIHYEFDKCIACEVCVRVCPINLPVVDWVMNKETKKKELRNYSIDFGVCIFCGNCVEYCPTNCLSMTEEYELATFDRHNLNFDNIALGRLPTNVTTDPSVKPLRELAYLPKGVMDPHEVPPSDVRVGKLPEEVYDWMKPKLNDIKNPTVEPNK.

2 consecutive 4Fe-4S ferredoxin-type domains span residues 55-84 and 95-124; these read GRIH…VDWV and RNYS…MTEE. 8 residues coordinate [4Fe-4S] cluster: Cys64, Cys67, Cys70, Cys74, Cys104, Cys107, Cys110, and Cys114.

Belongs to the complex I 23 kDa subunit family. NDH-1 is composed of at least 11 different subunits. Requires [4Fe-4S] cluster as cofactor.

Its subcellular location is the cellular thylakoid membrane. The enzyme catalyses a plastoquinone + NADH + (n+1) H(+)(in) = a plastoquinol + NAD(+) + n H(+)(out). The catalysed reaction is a plastoquinone + NADPH + (n+1) H(+)(in) = a plastoquinol + NADP(+) + n H(+)(out). In terms of biological role, NDH-1 shuttles electrons from an unknown electron donor, via FMN and iron-sulfur (Fe-S) centers, to quinones in the respiratory and/or the photosynthetic chain. The immediate electron acceptor for the enzyme in this species is believed to be plastoquinone. Couples the redox reaction to proton translocation, and thus conserves the redox energy in a proton gradient. This Prochlorococcus marinus subsp. pastoris (strain CCMP1986 / NIES-2087 / MED4) protein is NAD(P)H-quinone oxidoreductase subunit I.